Here is a 97-residue protein sequence, read N- to C-terminus: NADH-ubiquinone oxidoreductase chain 4L (97 aa).

The next 3 membrane-spanning stretches (helical) occupy residues 1-21 (MSMFGLFTCLSIYFSGVYVFC), 28-48 (LVVLLSLEYIVLSLFMLIVLF), and 57-77 (FFPVIFLVFSVCEGALGLSIL).

Belongs to the complex I subunit 4L family.

It is found in the mitochondrion membrane. It catalyses the reaction a ubiquinone + NADH + 5 H(+)(in) = a ubiquinol + NAD(+) + 4 H(+)(out). Core subunit of the mitochondrial membrane respiratory chain NADH dehydrogenase (Complex I) that is believed to belong to the minimal assembly required for catalysis. Complex I functions in the transfer of electrons from NADH to the respiratory chain. The immediate electron acceptor for the enzyme is believed to be ubiquinone. This Locusta migratoria (Migratory locust) protein is NADH-ubiquinone oxidoreductase chain 4L (ND4L).